Here is a 289-residue protein sequence, read N- to C-terminus: NAD(P)H-hydrate epimerase (289 aa).

The 207-residue stretch at 71–277 folds into the YjeF N-terminal domain; that stretch reads AQTIDNELMS…SIVEKYNLKI (207 aa). 122 to 126 contacts (6S)-NADPHX; sequence NNGGD. K(+) contacts are provided by Asn123 and Asp185. Residues 189–195 and Asp218 each bind (6S)-NADPHX; that span reads GFSFRGE. Ser221 lines the K(+) pocket.

Belongs to the NnrE/AIBP family. The cofactor is K(+).

It catalyses the reaction (6R)-NADHX = (6S)-NADHX. The enzyme catalyses (6R)-NADPHX = (6S)-NADPHX. Functionally, catalyzes the epimerization of the S- and R-forms of NAD(P)HX, a damaged form of NAD(P)H that is a result of enzymatic or heat-dependent hydration. This is a prerequisite for the S-specific NAD(P)H-hydrate dehydratase to allow the repair of both epimers of NAD(P)HX. The sequence is that of NAD(P)H-hydrate epimerase from Plasmodium knowlesi (strain H).